A 99-amino-acid chain; its full sequence is Complement inhibitor RaCI7 (99 aa).

An N-terminal signal peptide occupies residues 1–24 (MAALNGLVLLLLTISAMFISECYS). 3 disulfides stabilise this stretch: cysteine 37-cysteine 61, cysteine 42-cysteine 63, and cysteine 57-cysteine 78.

The protein belongs to the RaCI family. Expressed in salivary glands.

The protein localises to the secreted. Functionally, complement inhibitor. Prevents complement-mediated C5 activation by binding to C5. Binds C5 at a different binding site than the other tick complement inhibitors OmCI and CirpT1, and the drug eculizumab. This is Complement inhibitor RaCI7 from Dermacentor andersoni (Rocky mountain wood tick).